A 571-amino-acid chain; its full sequence is Proline--tRNA ligase (571 aa).

This sequence belongs to the class-II aminoacyl-tRNA synthetase family. ProS type 1 subfamily. As to quaternary structure, homodimer.

The protein resides in the cytoplasm. The catalysed reaction is tRNA(Pro) + L-proline + ATP = L-prolyl-tRNA(Pro) + AMP + diphosphate. In terms of biological role, catalyzes the attachment of proline to tRNA(Pro) in a two-step reaction: proline is first activated by ATP to form Pro-AMP and then transferred to the acceptor end of tRNA(Pro). As ProRS can inadvertently accommodate and process non-cognate amino acids such as alanine and cysteine, to avoid such errors it has two additional distinct editing activities against alanine. One activity is designated as 'pretransfer' editing and involves the tRNA(Pro)-independent hydrolysis of activated Ala-AMP. The other activity is designated 'posttransfer' editing and involves deacylation of mischarged Ala-tRNA(Pro). The misacylated Cys-tRNA(Pro) is not edited by ProRS. This Pseudomonas putida (strain ATCC 700007 / DSM 6899 / JCM 31910 / BCRC 17059 / LMG 24140 / F1) protein is Proline--tRNA ligase.